Here is a 64-residue protein sequence, read N- to C-terminus: DNA gyrase inhibitor YacG (64 aa).

Zn(2+)-binding residues include Cys-6, Cys-9, Cys-25, and Cys-29.

Belongs to the DNA gyrase inhibitor YacG family. Interacts with GyrB. The cofactor is Zn(2+).

Inhibits all the catalytic activities of DNA gyrase by preventing its interaction with DNA. Acts by binding directly to the C-terminal domain of GyrB, which probably disrupts DNA binding by the gyrase. The protein is DNA gyrase inhibitor YacG of Haemophilus influenzae (strain ATCC 51907 / DSM 11121 / KW20 / Rd).